A 279-amino-acid chain; its full sequence is Tryptophan 2,3-dioxygenase (279 aa).

Substrate-binding positions include 48–52, Y110, and R114; that span reads FIVIH. H237 contacts heme. T251 is a binding site for substrate.

This sequence belongs to the tryptophan 2,3-dioxygenase family. Homotetramer. Heme serves as cofactor.

It catalyses the reaction L-tryptophan + O2 = N-formyl-L-kynurenine. Its pathway is amino-acid degradation; L-tryptophan degradation via kynurenine pathway; L-kynurenine from L-tryptophan: step 1/2. In terms of biological role, heme-dependent dioxygenase that catalyzes the oxidative cleavage of the L-tryptophan (L-Trp) pyrrole ring and converts L-tryptophan to N-formyl-L-kynurenine. Catalyzes the oxidative cleavage of the indole moiety. This chain is Tryptophan 2,3-dioxygenase, found in Bacillus cereus (strain ATCC 10987 / NRS 248).